Reading from the N-terminus, the 287-residue chain is 4,4'-diapophytoene synthase (287 aa).

(2E,6E)-farnesyl diphosphate contacts are provided by residues 18–21, tyrosine 41, and arginine 45; that span reads HSKS. Mg(2+) contacts are provided by aspartate 48 and aspartate 52. Glutamine 165 lines the (2E,6E)-farnesyl diphosphate pocket. Asparagine 168 is a binding site for Mg(2+). Arginine 171 lines the (2E,6E)-farnesyl diphosphate pocket. Aspartate 172 serves as a coordination point for Mg(2+). Tyrosine 248 provides a ligand contact to (2E,6E)-farnesyl diphosphate.

This sequence belongs to the phytoene/squalene synthase family. CrtM subfamily. It depends on Mg(2+) as a cofactor.

The enzyme catalyses 2 (2E,6E)-farnesyl diphosphate = 15-cis-4,4'-diapophytoene + 2 diphosphate. It participates in carotenoid biosynthesis; staphyloxanthin biosynthesis; staphyloxanthin from farnesyl diphosphate: step 1/5. Involved in the biosynthesis of the yellow-orange carotenoid staphyloxanthin, which plays a role in the virulence via its protective function against oxidative stress. Catalyzes the head-to-head condensation of two molecules of farnesyl diphosphate (FPP) into the colorless C(30) carotenoid 4,4'-diapophytoene (dehydrosqualene). This Staphylococcus aureus (strain Mu50 / ATCC 700699) protein is 4,4'-diapophytoene synthase (crtM).